The chain runs to 474 residues: N-lysine methyltransferase SETD6 (474 aa).

A Phosphoserine modification is found at serine 14. In terms of domain architecture, SET spans 63–287 (PKVLVSRQGT…KGHEIFNTYG (225 aa)). Lysine 64 is subject to N6-methylated lysine; by autocatalysis. Position 74 to 76 (74 to 76 (AGY)) interacts with S-adenosyl-L-methionine. A substrate-binding site is contributed by tryptophan 123. The residue at position 180 (lysine 180) is an N6-methylated lysine; by autocatalysis. Residue tyrosine 224 participates in S-adenosyl-L-methionine binding. Substrate-binding residues include serine 225 and glutamine 227. S-adenosyl-L-methionine contacts are provided by residues 252-253 (NH) and tyrosine 298. Lysine 373 is subject to N6-methylated lysine; by autocatalysis.

Belongs to the class V-like SAM-binding methyltransferase superfamily. Histone-lysine methyltransferase family. SETD6 subfamily. In terms of assembly, monomer, homodimer and homotrimer; these structures are stabilized in the presence of S-adenosyl-L-methionine (SAM). Automethylated.

Its subcellular location is the nucleus. It catalyses the reaction L-lysyl-[protein] + S-adenosyl-L-methionine = N(6)-methyl-L-lysyl-[protein] + S-adenosyl-L-homocysteine + H(+). It carries out the reaction L-lysyl(8)-[histone H2AZ] + S-adenosyl-L-methionine = N(6)-methyl-L-lysyl(8)-[histone H2AZ] + S-adenosyl-L-homocysteine + H(+). Its function is as follows. Protein-lysine N-methyltransferase. Monomethylates 'Lys-310' of the RELA subunit of NF-kappa-B complex, leading to down-regulation of NF-kappa-B transcription factor activity. Monomethylates 'Lys-8' of H2AZ (H2AZK8me1). Required for the maintenance of embryonic stem cell self-renewal. Methylates PAK4. This is N-lysine methyltransferase SETD6 (Setd6) from Rattus norvegicus (Rat).